The sequence spans 697 residues: MMRPVVVKEKQLNESQIHAVEDEVRQAKTMDRDIVTHAMKQSVAKLNPKVMIKNPIMFVVEIGFIITFILSFLPSSSSSIPGWFNITVSLILLFTVLFANFAEALAEGRGKAQADSLKQSKKDVFANVVKENGDIVQVSATDLRKGDVVIVKQGEMIPSDGEVIKGLASVDESAITGESAPVIKEAGGDFCSVTGGTMVVSDEITIVITSNPGESFIDKMISLVEGAARQKTPNEIALNTVLTSLTLIFLIVVVTLPIFTNYLGFQIDTAVLVALLVCLIPTTIGGLLSAIGIAGMDRVTKFNVLAMSGKAVEAAGDINTIILDKTGTITFGNRMAHTLLPVGNETIEQVGKWAAISSVLDETPEGRSVIEYVQGKSISYNRELAEQGEFVPFKAETRMSGVDLQDGTKVRKGAVGAVIEWVESQGGTIPKDVNQKADLISKEGGTPLVVAVDNRIYGLIYLKDTVKPGMRDRFEQLRQMGIKTVMCTGDNPLTAATIAKEAGVDEFVAECKPEDKIAVIKAEQDKGKLVAMTGDGTNDAPALAQADVGLAMNSGTTAAKEAANMIDLDSNPTKIIEVVGIGKQLLMTRGALTTFSIANDIAKYFAIIPAMFTLAIPQMEALNIMKLTSPLSAILSALIFNAVIIPLLIPLAMKGIAYKPMSSNALLSRNLLIYGLGGVIVPFIGIKVIDMIVGLFI.

4 helical membrane passes run 55 to 75 (PIMF…FLPS), 79 to 99 (SIPG…VLFA), 245 to 265 (LTLI…YLGF), and 271 to 291 (VLVA…LSAI). The active-site 4-aspartylphosphate intermediate is the Asp-324. ATP contacts are provided by residues Asp-361, Glu-365, 393-400 (FKAETRMS), and Lys-412. Mg(2+) is bound by residues Asp-535 and Asp-539. Helical transmembrane passes span 605 to 625 (FAII…LNIM), 633 to 653 (AILS…PLAM), and 677 to 697 (GGVI…GLFI).

Belongs to the cation transport ATPase (P-type) (TC 3.A.3) family. Type IA subfamily. The system is composed of three essential subunits: KdpA, KdpB and KdpC.

The protein localises to the cell membrane. It carries out the reaction K(+)(out) + ATP + H2O = K(+)(in) + ADP + phosphate + H(+). Functionally, part of the high-affinity ATP-driven potassium transport (or Kdp) system, which catalyzes the hydrolysis of ATP coupled with the electrogenic transport of potassium into the cytoplasm. This subunit is responsible for energy coupling to the transport system and for the release of the potassium ions to the cytoplasm. This is Potassium-transporting ATPase ATP-binding subunit from Bacillus cereus (strain B4264).